Consider the following 260-residue polypeptide: DNA repair protein RecO (260 aa).

Belongs to the RecO family.

In terms of biological role, involved in DNA repair and RecF pathway recombination. In Levilactobacillus brevis (strain ATCC 367 / BCRC 12310 / CIP 105137 / JCM 1170 / LMG 11437 / NCIMB 947 / NCTC 947) (Lactobacillus brevis), this protein is DNA repair protein RecO.